We begin with the raw amino-acid sequence, 683 residues long: Protein hook (683 aa).

The Calponin-homology (CH) domain occupies 5-123 (NGMYYSLLEW…RLLQLVLGCA (119 aa)). Coiled-coil stretches lie at residues 135–440 (EIMC…LKCG) and 484–594 (QTAL…AKEV).

Belongs to the hook family. In terms of assembly, homodimer. Interacts with microtubules via its N-terminus.

Its subcellular location is the cytoplasm. The protein localises to the cytoskeleton. The protein resides in the endosome. It localises to the synapse. Involved in endocytic trafficking by stabilizing organelles of the endocytic pathway. Probably acts as a cytoskeletal linker protein required to tether endosome vesicles to the cytoskeleton. Involved in modulation of endocytosis at stages required for down-regulation of membrane proteins that control synapse size. Not involved in synaptic vesicle recycling. Required in R7 cells for boss endocytosis into multivesicular bodies (MVBs). Has a role in regulating adult longevity. This chain is Protein hook, found in Drosophila grimshawi (Hawaiian fruit fly).